A 133-amino-acid polypeptide reads, in one-letter code: Large ribosomal subunit protein bL17 (133 aa).

Belongs to the bacterial ribosomal protein bL17 family. Part of the 50S ribosomal subunit. Contacts protein L32.

This is Large ribosomal subunit protein bL17 from Thermodesulfovibrio yellowstonii (strain ATCC 51303 / DSM 11347 / YP87).